We begin with the raw amino-acid sequence, 117 residues long: Photosystem II reaction center Psb28 protein (117 aa).

Belongs to the Psb28 family. In terms of assembly, part of the photosystem II complex.

It localises to the cellular thylakoid membrane. The chain is Photosystem II reaction center Psb28 protein from Prochlorococcus marinus (strain MIT 9515).